The sequence spans 195 residues: MAPKLGYWKIKGLVQPTRLLLEYLGEAYEERLYDRNDGDVWRNEKFKLGLDFPNLPYYIDGDVKLTQSMAILRYIADKHNMLGGCPKERAEISMLEGAILDIRYGVSRIAYNKEFETLKVDFLNQLPGMLKMFEDRLSHNTYLNGDKVTHPDFMLYDALDVNLPPIKNYLNSNRYIKWPLQGWSATFGGGDAPPK.

Residues 1-83 form the GST N-terminal domain; that stretch reads MAPKLGYWKI…YIADKHNMLG (83 aa). Residues 7–8, 41–45, 54–55, and 67–68 contribute to the glutathione site; these read YW, WRNEK, NL, and QS. The GST C-terminal domain occupies 85–195; the sequence is CPKERAEISM…TFGGGDAPPK (111 aa). Y111 contributes to the substrate binding site.

This sequence belongs to the GST superfamily. Mu family. As to quaternary structure, homodimer.

It carries out the reaction RX + glutathione = an S-substituted glutathione + a halide anion + H(+). Conjugation of reduced glutathione to a wide number of exogenous and endogenous hydrophobic electrophiles. In terms of biological role, GST isoenzymes appear to play a central role in the parasite detoxification system. Other functions are also suspected including a role in increasing the solubility of haematin in the parasite gut. The protein is Glutathione S-transferase class-mu 26 kDa isozyme of Schistosoma mansoni (Blood fluke).